Reading from the N-terminus, the 238-residue chain is Ribosomal RNA small subunit methyltransferase G (238 aa).

Residues Gly77, Phe82, 128–129 (AE), and Arg147 each bind S-adenosyl-L-methionine.

This sequence belongs to the methyltransferase superfamily. RNA methyltransferase RsmG family.

It is found in the cytoplasm. Functionally, specifically methylates the N7 position of guanine in position 535 of 16S rRNA. The protein is Ribosomal RNA small subunit methyltransferase G of Lysinibacillus sphaericus (strain C3-41).